The following is a 131-amino-acid chain: Small ribosomal subunit protein bS6 (131 aa).

Positions 98–131 (EASPMVKAKDERRERRDDFANETADDAEAGDSEE) are disordered. The segment covering 104–116 (KAKDERRERRDDF) has biased composition (basic and acidic residues). Residues 120–131 (TADDAEAGDSEE) are compositionally biased toward acidic residues.

This sequence belongs to the bacterial ribosomal protein bS6 family.

Binds together with bS18 to 16S ribosomal RNA. The chain is Small ribosomal subunit protein bS6 from Cronobacter sakazakii (strain ATCC BAA-894) (Enterobacter sakazakii).